The sequence spans 1691 residues: Protein TIC 214 (1691 aa).

Helical transmembrane passes span methionine 19–leucine 39, valine 60–leucine 80, leucine 84–proline 104, leucine 123–leucine 143, threonine 158–phenylalanine 178, and phenylalanine 200–alanine 220. Residues glutamate 819–lysine 839 are disordered.

Belongs to the TIC214 family. As to quaternary structure, part of the Tic complex.

It localises to the plastid. The protein resides in the chloroplast inner membrane. In terms of biological role, involved in protein precursor import into chloroplasts. May be part of an intermediate translocation complex acting as a protein-conducting channel at the inner envelope. This chain is Protein TIC 214, found in Adiantum capillus-veneris (Maidenhair fern).